We begin with the raw amino-acid sequence, 820 residues long: Potassium channel GORK (820 aa).

Topologically, residues 1–69 are cytoplasmic; it reads MGRLRRRQEI…PKNRWYKAWE (69 aa). The chain crosses the membrane as a helical span at residues 70-90; that stretch reads MFILVWAIYSSLFTPMEFGFF. The Extracellular segment spans residues 91 to 97; that stretch reads RGLPERL. The chain crosses the membrane as a helical span at residues 98 to 118; it reads FVLDIVGQIAFLVDIVLQFFV. Over 119–141 the chain is Cytoplasmic; that stretch reads AYRDTQTYRTVYKPTRIAFRYLK. The helical transmembrane segment at 142–162 threads the bilayer; that stretch reads SHFLMDFIGCFPWDLIYKASG. The Extracellular segment spans residues 163 to 168; that stretch reads KHELVR. A helical; Voltage-sensor transmembrane segment spans residues 169-189; sequence YLLWIRLFRVRKVVEFFQRLE. Over 190 to 203 the chain is Cytoplasmic; that stretch reads KDTRINYLFTRILK. The chain crosses the membrane as a helical span at residues 204–224; it reads LLFVEVYCTHTAACIFYYLAT. At 225–259 the chain is on the extracellular side; that stretch reads TLPPENEGYTWIGSLKLGDYSYENFREIDLWKRYT. Residues 260–279 constitute an intramembrane region (pore-forming); it reads TALYFAIVTMATVGYGDIHA. Over 280–285 the chain is Extracellular; sequence VNLREM. The helical transmembrane segment at 286–306 threads the bilayer; it reads IFVMIYVSFDMVLGAYLIGNI. Topologically, residues 307 to 820 are cytoplasmic; that stretch reads TALIVKGSNT…YMISDTTDQT (514 aa). 386-508 is a binding site for a nucleoside 3',5'-cyclic phosphate; sequence LFKGCSTEFI…ILNNIMEEKE (123 aa). 6 ANK repeats span residues 528 to 559, 563 to 592, 596 to 625, 627 to 656, 660 to 689, and 693 to 722; these read EAEL…DPNK, DGRS…DVNL, FGHT…SFNL, DSGN…NPNS, DHRT…SVIS, and WGNS…AQSS. The region spanning 740–820 is the KHA domain; that stretch reads KCTVFPFHPQ…YMISDTTDQT (81 aa).

The protein belongs to the potassium channel family. Plant (TC 1.A.1.4) subfamily. In terms of assembly, the potassium channel is probably composed of a homo- or heterotetrameric complex of pore-forming subunits. In terms of tissue distribution, expressed in guard cell-containing tissues, in root epidermal cells and in root hairs. Detected in vascular cells of the root and shoot.

Its subcellular location is the membrane. In terms of biological role, major selective outward-rectifying potassium channel of the guard cell membrane. Involved in regulation of stomatal movements according to the water status. Assuming opened or closed conformations in response to the voltage difference across the membrane, the channel is activated by depolarization. Conductance of the channel is modulated in a potassium-dependent fashion. May interact with the cytoskeleton or with regulatory proteins. The chain is Potassium channel GORK (GORK) from Arabidopsis thaliana (Mouse-ear cress).